The chain runs to 366 residues: Quinolinate synthase (366 aa).

The iminosuccinate site is built by His44 and Ser61. Cys108 is a [4Fe-4S] cluster binding site. Iminosuccinate is bound by residues 139-141 (YIN) and Ser160. Position 228 (Cys228) interacts with [4Fe-4S] cluster. Iminosuccinate-binding positions include 254 to 256 (HPE) and Thr271. [4Fe-4S] cluster is bound at residue Cys318.

Belongs to the quinolinate synthase family. Type 3 subfamily. [4Fe-4S] cluster is required as a cofactor.

The protein localises to the cytoplasm. The catalysed reaction is iminosuccinate + dihydroxyacetone phosphate = quinolinate + phosphate + 2 H2O + H(+). It functions in the pathway cofactor biosynthesis; NAD(+) biosynthesis; quinolinate from iminoaspartate: step 1/1. Catalyzes the condensation of iminoaspartate with dihydroxyacetone phosphate to form quinolinate. This is Quinolinate synthase from Listeria monocytogenes serotype 4b (strain F2365).